We begin with the raw amino-acid sequence, 195 residues long: Fe/S biogenesis protein NfuA (195 aa).

2 residues coordinate [4Fe-4S] cluster: Cys-152 and Cys-155.

Belongs to the NfuA family. As to quaternary structure, homodimer. Requires [4Fe-4S] cluster as cofactor.

Functionally, involved in iron-sulfur cluster biogenesis. Binds a 4Fe-4S cluster, can transfer this cluster to apoproteins, and thereby intervenes in the maturation of Fe/S proteins. Could also act as a scaffold/chaperone for damaged Fe/S proteins. The sequence is that of Fe/S biogenesis protein NfuA from Vibrio cholerae serotype O1 (strain ATCC 39315 / El Tor Inaba N16961).